The chain runs to 341 residues: Uroporphyrinogen decarboxylase (341 aa).

Residues 23–27 (RQAGR), Asp-73, Tyr-147, Ser-202, and His-318 each bind substrate.

The protein belongs to the uroporphyrinogen decarboxylase family. As to quaternary structure, homodimer.

The protein localises to the cytoplasm. The enzyme catalyses uroporphyrinogen III + 4 H(+) = coproporphyrinogen III + 4 CO2. It participates in porphyrin-containing compound metabolism; protoporphyrin-IX biosynthesis; coproporphyrinogen-III from 5-aminolevulinate: step 4/4. In terms of biological role, catalyzes the decarboxylation of four acetate groups of uroporphyrinogen-III to yield coproporphyrinogen-III. This is Uroporphyrinogen decarboxylase from Novosphingobium aromaticivorans (strain ATCC 700278 / DSM 12444 / CCUG 56034 / CIP 105152 / NBRC 16084 / F199).